An 826-amino-acid chain; its full sequence is Hyaluronate lyase HylA (826 aa).

Residues 1–36 constitute a signal peptide (tat-type signal); it reads MFDIPYQVPSRRTFLSLSALSAIAIAASPEMPDAFA. Catalysis depends on residues H276, Y285, and R339. Residues 800–826 are disordered; that stretch reads LSPALPKPTKPSLRASSYPLGLPHTSS.

It belongs to the polysaccharide lyase 8 family. Predicted to be exported by the Tat system. The position of the signal peptide cleavage has not been experimentally proven.

It is found in the secreted. The enzyme catalyses [hyaluronan](n) = n 3-(4-deoxy-beta-D-gluc-4-enuronosyl)-N-acetyl-D-glucosamine + H2O. Functionally, degrades hyaluronic acid (HA) into large-sized HA oligosaccharides, including tetrasaccharide HA (HA-4), hexasaccharide HA (HA-6) and higher molecular weight HA, and to a lesser extent into HA disaccharides (HA-2). Involved in the pathogenesis of acne. HA degradation products induce secretion of proinflammatory cytokines (IL-6, IL-8 and TNF-alpha) from human HaCaT keratinocyte cell line and from mouse bone marrow derived macrophages (BMDMs). Produced HA fragments also direct robust TLR2-dependent inflammation in the mouse model of acne. The chain is Hyaluronate lyase HylA from Cutibacterium acnes (Propionibacterium acnes).